The sequence spans 227 residues: Casparian strip membrane protein 2 (227 aa).

Over 1-59 (MSSTSEATVIHMDGAAGKTPATAVPPPPPPAPTAPVQQQRKAGGVPFLLRSGAEGFRRC) the chain is Cytoplasmic. The tract at residues 17 to 37 (GKTPATAVPPPPPPAPTAPVQ) is disordered. A compositionally biased stretch (pro residues) spans 23-33 (AVPPPPPPAPT). A helical transmembrane segment spans residues 60 to 80 (MALLDLLLRVAAMGPTLAAAI). The Extracellular segment spans residues 81–107 (STGTSDETLSVFTHYFQFRARFDDFSA). A helical transmembrane segment spans residues 108 to 128 (FTFFMVANAVAAGYLLMSLPF). Over 129-149 (SAFGVIRPKATSVRLLLLICD) the chain is Cytoplasmic. Residues 150–170 (TIMVVLVTAAASAAAAIVYVA) form a helical membrane-spanning segment. At 171-197 (HEGNRRANWVPICMQFHGFCKRTSGAV) the chain is on the extracellular side. Residues 198 to 218 (VASFLAVLIFILLVFLGACAI) traverse the membrane as a helical segment. At 219–227 (RRRHTTTKH) the chain is on the cytoplasmic side.

The protein belongs to the Casparian strip membrane proteins (CASP) family. As to quaternary structure, homodimer and heterodimers.

It localises to the cell membrane. Functionally, regulates membrane-cell wall junctions and localized cell wall deposition. Required for establishment of the Casparian strip membrane domain (CSD) and the subsequent formation of Casparian strips, a cell wall modification of the root endodermis that determines an apoplastic barrier between the intraorganismal apoplasm and the extraorganismal apoplasm and prevents lateral diffusion. The chain is Casparian strip membrane protein 2 from Brachypodium distachyon (Purple false brome).